Here is a 190-residue protein sequence, read N- to C-terminus: Xanthine phosphoribosyltransferase (190 aa).

The xanthine site is built by L20 and N27. 5-phospho-alpha-D-ribose 1-diphosphate is bound at residue 128-132; the sequence is ANGKA. Position 156 (K156) interacts with xanthine.

Belongs to the purine/pyrimidine phosphoribosyltransferase family. Xpt subfamily. As to quaternary structure, homodimer.

It localises to the cytoplasm. The enzyme catalyses XMP + diphosphate = xanthine + 5-phospho-alpha-D-ribose 1-diphosphate. The protein operates within purine metabolism; XMP biosynthesis via salvage pathway; XMP from xanthine: step 1/1. Converts the preformed base xanthine, a product of nucleic acid breakdown, to xanthosine 5'-monophosphate (XMP), so it can be reused for RNA or DNA synthesis. The polypeptide is Xanthine phosphoribosyltransferase (Ruminiclostridium cellulolyticum (strain ATCC 35319 / DSM 5812 / JCM 6584 / H10) (Clostridium cellulolyticum)).